We begin with the raw amino-acid sequence, 342 residues long: N-acetyl-gamma-glutamyl-phosphate reductase (342 aa).

The active site involves cysteine 149.

This sequence belongs to the NAGSA dehydrogenase family. Type 1 subfamily.

Its subcellular location is the cytoplasm. It catalyses the reaction N-acetyl-L-glutamate 5-semialdehyde + phosphate + NADP(+) = N-acetyl-L-glutamyl 5-phosphate + NADPH + H(+). It functions in the pathway amino-acid biosynthesis; L-arginine biosynthesis; N(2)-acetyl-L-ornithine from L-glutamate: step 3/4. In terms of biological role, catalyzes the NADPH-dependent reduction of N-acetyl-5-glutamyl phosphate to yield N-acetyl-L-glutamate 5-semialdehyde. The sequence is that of N-acetyl-gamma-glutamyl-phosphate reductase from Roseobacter denitrificans (strain ATCC 33942 / OCh 114) (Erythrobacter sp. (strain OCh 114)).